Reading from the N-terminus, the 732-residue chain is Probable zinc transporter cis4 (732 aa).

A run of 12 helical transmembrane segments spans residues glutamate 52–valine 72, phenylalanine 79–tyrosine 99, valine 111–leucine 131, tyrosine 163–phenylalanine 183, valine 189–valine 209, leucine 219–leucine 239, glycine 240–isoleucine 260, isoleucine 268–isoleucine 288, isoleucine 350–tryptophan 370, alanine 380–alanine 400, isoleucine 415–valine 435, and leucine 453–histidine 473. Residues histidine 526–asparagine 547 form a disordered region. 2 helical membrane-spanning segments follow: residues isoleucine 586 to leucine 606 and phenylalanine 615 to isoleucine 635.

The protein belongs to the cation diffusion facilitator (CDF) transporter (TC 2.A.4) family. SLC30A subfamily. In terms of assembly, interacts with zrg17.

The protein resides in the endoplasmic reticulum membrane. It is found in the golgi apparatus. The protein localises to the cis-Golgi network membrane. Probable zinc transporter involved in Golgi membrane trafficking through the regulation of zinc homeostasis. This is Probable zinc transporter cis4 (cis4) from Schizosaccharomyces pombe (strain 972 / ATCC 24843) (Fission yeast).